The chain runs to 141 residues: Large ribosomal subunit protein uL11 (141 aa).

It belongs to the universal ribosomal protein uL11 family. As to quaternary structure, part of the ribosomal stalk of the 50S ribosomal subunit. Interacts with L10 and the large rRNA to form the base of the stalk. L10 forms an elongated spine to which L12 dimers bind in a sequential fashion forming a multimeric L10(L12)X complex. Post-translationally, one or more lysine residues are methylated.

Functionally, forms part of the ribosomal stalk which helps the ribosome interact with GTP-bound translation factors. The sequence is that of Large ribosomal subunit protein uL11 from Helicobacter hepaticus (strain ATCC 51449 / 3B1).